The primary structure comprises 316 residues: Protein YIPF2 (316 aa).

Position 2 is an N-acetylalanine (A2). Topologically, residues 2–124 are cytoplasmic; that stretch reads ASADELTFHE…LRNRPDLYGP (123 aa). The tract at residues 16–37 is disordered; it reads TNLLADTPDAATTSRSDQLTPQ. Polar residues predominate over residues 25 to 36; the sequence is AATTSRSDQLTP. A helical membrane pass occupies residues 125-145; it reads FWICATLAFVLAVTGNLTLVL. The Lumenal portion of the chain corresponds to 146–163; that stretch reads AQRRDPSIHYSPQFHKVT. The chain crosses the membrane as a helical span at residues 164-184; the sequence is VAGISIYCYAWLVPLALWGFL. Over 185 to 196 the chain is Cytoplasmic; sequence RWRKGVQERMGP. A helical transmembrane segment spans residues 197–219; it reads YTFLETVCIYGYSLFVFIPMVVL. The Lumenal segment spans residues 220–231; sequence WLIPVPWLQWLF. The chain crosses the membrane as a helical span at residues 232–252; the sequence is GALALGLSAAGLVFTLWPVVR. At 253–256 the chain is on the cytoplasmic side; the sequence is EDTR. The helical transmembrane segment at 257-277 threads the bilayer; sequence LVATVLLSVVVLLHALLAMGC. The Lumenal segment spans residues 278-316; it reads KLYFFQSLPPENVAPPPQITSLPSNIALSPTLPQSLAPS.

It belongs to the YIP1 family. In terms of assembly, interacts with YIPF6; this interaction may stabilize YIPF2. May also form a ternary complex with YIPF1 and YIPF6.

It localises to the golgi apparatus. The protein resides in the cis-Golgi network membrane. It is found in the trans-Golgi network membrane. The protein localises to the late endosome membrane. The polypeptide is Protein YIPF2 (YIPF2) (Homo sapiens (Human)).